Consider the following 856-residue polypeptide: Envelope glycoprotein gp150 (856 aa).

Over 1–785 the chain is Extracellular; the sequence is MAEGFVANGQ…WIGNIPQYLK (785 aa). 19 N-linked (GlcNAc...) asparagine; by host glycosylation sites follow: asparagine 220, asparagine 258, asparagine 269, asparagine 274, asparagine 298, asparagine 330, asparagine 336, asparagine 342, asparagine 418, asparagine 422, asparagine 448, asparagine 469, asparagine 481, asparagine 499, asparagine 518, asparagine 531, asparagine 548, asparagine 551, and asparagine 556. A fusion peptide region spans residues 616 to 636; that stretch reads VMLALATVLSMAGAGTGATAI. Residues 643-693 adopt a coiled-coil conformation; sequence HQVLATQQEAIEKVTEALKITNLRLVTLEHQVLVIGLKVEAMEKFLYTAFA. Residues 662-680 are immunosuppression; sequence ITNLRLVTLEHQVLVIGLK. Asparagine 717, asparagine 721, asparagine 729, and asparagine 737 each carry an N-linked (GlcNAc...) asparagine; by host glycan. The stretch at 736–772 forms a coiled coil; the sequence is YNQTKDLQKKFYGIIMDIEQNNVQGKKGLQQLQKWED. Residues 786 to 806 traverse the membrane as a helical segment; sequence GLLGSIVGIGLGILLLILCLP. The Cytoplasmic segment spans residues 807-856; it reads TLVDCIRNCIHKILGYTVIAMPEVDGEEIQPQMELRRNGRQCGMSEKEEE.

In terms of assembly, the mature envelope protein (Env) consists of a trimer of SU-TM heterodimers attached by noncovalent interactions or by a labile interchain disulfide bond. Post-translationally, specific enzymatic cleavages in vivo yield mature proteins. Envelope glycoproteins are synthesized as an inactive precursor that is N-glycosylated and processed likely by host cell furin or by a furin-like protease in the Golgi to yield the mature SU and TM proteins. The cleavage site between SU and TM requires the minimal sequence [KR]-X-[KR]-R.

The protein resides in the virion membrane. It is found in the host cell membrane. In terms of biological role, the surface protein (SU) attaches the virus to the host cell by binding to its receptor. This interaction triggers the refolding of the transmembrane protein (TM) and is thought to activate its fusogenic potential by unmasking its fusion peptide. Fusion occurs at the host cell plasma membrane. Functionally, the transmembrane protein (TM) acts as a class I viral fusion protein. Under the current model, the protein has at least 3 conformational states: pre-fusion native state, pre-hairpin intermediate state, and post-fusion hairpin state. During viral and target cell membrane fusion, the coiled coil regions (heptad repeats) assume a trimer-of-hairpins structure, positioning the fusion peptide in close proximity to the C-terminal region of the ectodomain. The formation of this structure appears to drive apposition and subsequent fusion of viral and target cell membranes. Membranes fusion leads to delivery of the nucleocapsid into the cytoplasm. This is Envelope glycoprotein gp150 (env) from Feline immunodeficiency virus (strain UT-113) (FIV).